The following is a 292-amino-acid chain: Insulin-like growth factor-binding protein 3 (292 aa).

An N-terminal signal peptide occupies residues 1–27 (MHPARPALWAAALTALTLLRGPPVARA). Residues 36–119 (PVVRCEPCDA…LNGRGFCANA (84 aa)) form the IGFBP N-terminal domain. Disulfide bonds link Cys-40-Cys-69, Cys-43-Cys-71, Cys-51-Cys-72, Cys-60-Cys-75, Cys-83-Cys-96, and Cys-90-Cys-116. N-linked (GlcNAc...) asparagine glycans are attached at residues Asn-118, Asn-124, and Asn-137. 2 disordered regions span residues 127–161 (AYLP…THRV) and 191–211 (YESQ…ETEY). Residues 129–139 (LPSQPSPGNTT) show a composition bias toward polar residues. Ser-149 is modified (phosphoserine). Over residues 192-203 (ESQSTDTQNFSS) the composition is skewed to polar residues. Asn-200 carries an N-linked (GlcNAc...) asparagine glycan. Ser-202 is modified (phosphoserine). The 76-residue stretch at 211–286 (YGPCRREMED…DTKGKDDVHC (76 aa)) folds into the Thyroglobulin type-1 domain. 3 cysteine pairs are disulfide-bonded: Cys-214/Cys-241, Cys-252/Cys-263, and Cys-265/Cys-286.

In terms of assembly, interacts with XLKD1. Binds IGF2 more than IGF1. Forms a ternary complex of about 140 to 150 kDa with IGF1 or IGF2 and a 85 kDa glycoprotein (ALS). Interacts with humanin; humanin competes with importin KPNB1 for binding to IGFBP3, blocking IGFBP3 nuclear import and IGFBP3-mediated apoptosis. Interacts with TMEM219. Interacts with RXRA; this interaction modulates the transcriptional activity of RXRA. Interacts with LRP1; this interaction mediates cell growth inhibition independent of IGF1. Post-translationally, phosphorylated by FAM20C in the extracellular medium. Phosphorylated by CK2; resulting in decreased nuclear localization.

It localises to the secreted. It is found in the nucleus. Its function is as follows. Multifunctional protein that plays a critical role in regulating the availability of IGFs such as IGF1 and IGF2 to their receptors and thereby regulates IGF-mediated cellular processes including proliferation, differentiation, and apoptosis in a cell-type specific manner. Also exhibits IGF-independent antiproliferative and apoptotic effects mediated by its receptor TMEM219/IGFBP-3R. Inhibits the positive effect of humanin on insulin sensitivity. Promotes testicular germ cell apoptosis. Acts via LRP-1/alpha2M receptor, also known as TGF-beta type V receptor, to mediate cell growth inhibition independent of IGF1. Mechanistically, induces serine-specific dephosphorylation of IRS1 or IRS2 upon ligation to its receptor, leading to the inhibitory cascade. In the nucleus, interacts with transcription factors such as retinoid X receptor-alpha/RXRA to regulate transcriptional signaling and apoptosis. This chain is Insulin-like growth factor-binding protein 3 (Igfbp3), found in Rattus norvegicus (Rat).